The following is a 322-amino-acid chain: Transaldolase (322 aa).

Lysine 136 serves as the catalytic Schiff-base intermediate with substrate.

The protein belongs to the transaldolase family. Type 1 subfamily. In terms of assembly, homodimer.

The protein localises to the cytoplasm. It carries out the reaction D-sedoheptulose 7-phosphate + D-glyceraldehyde 3-phosphate = D-erythrose 4-phosphate + beta-D-fructose 6-phosphate. It participates in carbohydrate degradation; pentose phosphate pathway; D-glyceraldehyde 3-phosphate and beta-D-fructose 6-phosphate from D-ribose 5-phosphate and D-xylulose 5-phosphate (non-oxidative stage): step 2/3. Its function is as follows. Transaldolase is important for the balance of metabolites in the pentose-phosphate pathway. The polypeptide is Transaldolase (Xanthomonas oryzae pv. oryzae (strain PXO99A)).